A 165-amino-acid polypeptide reads, in one-letter code: U11/U12 small nuclear ribonucleoprotein 25 kDa protein (165 aa).

One can recognise a Ubiquitin-like domain in the interval 52–137; it reads MRLSVVKLDG…IRNNSQVTFM (86 aa). Positions 145-165 are disordered; sequence RGRHSKRKKHRLFRSLHKTSS.

In terms of assembly, component of the U11/U12 snRNPs that are part of the U12-type spliceosome.

Its subcellular location is the nucleus. In Arabidopsis thaliana (Mouse-ear cress), this protein is U11/U12 small nuclear ribonucleoprotein 25 kDa protein (SNRNP25).